A 151-amino-acid chain; its full sequence is Neuroglobin (151 aa).

One can recognise a Globin domain in the interval 1-149 (MERPESELIR…VVQAMSRGWD (149 aa)). Heme b is bound by residues His64 and His96.

Belongs to the globin family. Monomer. Homodimer and homotetramer; disulfide-linked. Mainly monomeric but also detected as part of homodimers and homotetramers. Interacts with 14-3-3 proteins; regulates the phosphorylation of NGB. Could interact (ferrous form) with G-alpha(i) proteins (GTP-bound form). Phosphorylated during hypoxia by ERK1/ERK2. Phosphorylation regulates the heme pocket hexacoordination preventing the association of His-64 with the heme metal center. Thereby, promotes the access of dioxygen and nitrite to the heme and stimulates the nitrite reductase activity. Phosphorylation during hypoxia is stabilized by 14-3-3 proteins. As to expression, widely distributed throughout the adult brain, including cerebral cortex, hippocampus, thalamus, hypothalamus, olfactory bulb, and cerebellum.

It is found in the cytoplasm. The protein localises to the cytosol. Its subcellular location is the mitochondrion matrix. It carries out the reaction Fe(III)-heme b-[protein] + nitric oxide + H2O = Fe(II)-heme b-[protein] + nitrite + 2 H(+). Its function is as follows. Monomeric globin with a bis-histidyl six-coordinate heme-iron atom through which it can bind dioxygen, carbon monoxide and nitric oxide. Could help transport oxygen and increase its availability to the metabolically active neuronal tissues, though its low quantity in tissues as well as its high affinity for dioxygen, which may limit its oxygen-releasing ability, argue against it. The ferrous/deoxygenated form exhibits a nitrite reductase activity and it could produce nitric oxide which in turn inhibits cellular respiration in response to hypoxia. In its ferrous/deoxygenated state, it may also exhibit GDI (Guanine nucleotide Dissociation Inhibitor) activity toward heterotrimeric G-alpha proteins, thereby regulating signal transduction to facilitate neuroprotective responses in the wake of hypoxia and associated oxidative stress. The protein is Neuroglobin of Rattus norvegicus (Rat).